A 278-amino-acid polypeptide reads, in one-letter code: HTH-type transcriptional activator RhaS (278 aa).

The HTH araC/xylS-type domain maps to 174 to 272; it reads NQLLAWLEDH…DWSPRDIRQG (99 aa). 2 consecutive DNA-binding regions (H-T-H motif) follow at residues 191–212 and 239–262; these read EEVA…KQQT and VTDI…RREF.

As to quaternary structure, binds DNA as a dimer.

The protein localises to the cytoplasm. Activates expression of the rhaBAD and rhaT operons. This chain is HTH-type transcriptional activator RhaS, found in Klebsiella pneumoniae (strain 342).